Here is a 99-residue protein sequence, read N- to C-terminus: Elongin-C (99 aa).

Position 2 is an N-acetylserine (S2). Position 2 is a phosphoserine (S2).

The protein belongs to the SKP1 family. Heterodimer with ELA1. Component of a CRL3 E3 ubiquitin ligase complex consisting of the cullin CUL3, the linker protein ELC1, the substrate receptor ELA1, and the RING protein HRT1. Interacts with CIN5. Interacts with PCL6. Interacts with SNF4. Interacts with the large RNA polymerase II subunit RPO21 in a manner dependent on DEF1. Interacts with DEF1. Interacts with RAD7. Interacts with RAD16.

The protein localises to the cytoplasm. Its subcellular location is the nucleus. Functionally, as part of the CRL3 E3 ubiquitin ligase complex; polyubiquitylates monoubiquitylated RNA polymerase II subunit RPO21 to trigger its proteolysis; plays a role in global genomic repair. Prevents degradation of interacting proteins like PCL6 by the proteasome. The sequence is that of Elongin-C (ELC1) from Saccharomyces cerevisiae (strain ATCC 204508 / S288c) (Baker's yeast).